The chain runs to 134 residues: D-ribose pyranase (134 aa).

The active-site Proton donor is H20. Substrate is bound by residues D28, H101, and 123–125; that span reads YSN.

This sequence belongs to the RbsD / FucU family. RbsD subfamily. In terms of assembly, homodecamer.

It is found in the cytoplasm. It catalyses the reaction beta-D-ribopyranose = beta-D-ribofuranose. It participates in carbohydrate metabolism; D-ribose degradation; D-ribose 5-phosphate from beta-D-ribopyranose: step 1/2. Catalyzes the interconversion of beta-pyran and beta-furan forms of D-ribose. In Pseudomonas syringae pv. syringae (strain B728a), this protein is D-ribose pyranase.